A 46-amino-acid chain; its full sequence is Light-harvesting protein B-800/850 beta 1 chain (46 aa).

The Cytoplasmic portion of the chain corresponds to alanine 2–aspartate 19. A bacteriochlorophyll-binding residues include histidine 18 and histidine 36. The helical transmembrane segment at glutamine 20 to tryptophan 42 threads the bilayer. The Periplasmic segment spans residues lysine 43–phenylalanine 46.

This sequence belongs to the antenna complex beta subunit family. The core complex is formed by different alpha and beta chains, binding bacteriochlorophyll molecules, and arranged most probably in tetrameric structures disposed around the reaction center.

It is found in the cell inner membrane. In terms of biological role, antenna complexes are light-harvesting systems, which transfer the excitation energy to the reaction centers. This is Light-harvesting protein B-800/850 beta 1 chain (B1) from Magnetospirillum molischianum (Rhodospirillum molischianum).